Here is a 590-residue protein sequence, read N- to C-terminus: Major surface protein MspTL (590 aa).

The N-terminal stretch at 1-19 is a signal peptide; sequence MKKILAFFLVFALAGAVFA.

The protein resides in the cell outer membrane. Major component of the outer membrane. This is Major surface protein MspTL (mspTL) from Treponema lecithinolyticum.